A 54-amino-acid polypeptide reads, in one-letter code: Ovomucoid (54 aa).

One can recognise a Kazal-like domain in the interval 4 to 54 (VDCSDYPKPACLLEYMPLCGSDNKTYDNKCSFCNAVVDSNGTLSLSHFGKC). Intrachain disulfides connect Cys-6-Cys-36, Cys-14-Cys-33, and Cys-22-Cys-54. N-linked (GlcNAc...) asparagine glycosylation occurs at Asn-43.

It is found in the secreted. This Opisthocomus hoazin (Hoatzin) protein is Ovomucoid.